Reading from the N-terminus, the 275-residue chain is Nitrogenase iron protein 2 (275 aa).

9–16 is a binding site for ATP; that stretch reads GKGGIGKS. Residue Cys97 participates in [4Fe-4S] cluster binding. At Arg100 the chain carries ADP-ribosylarginine; by dinitrogenase reductase ADP-ribosyltransferase. Cys132 contributes to the [4Fe-4S] cluster binding site.

It belongs to the NifH/BchL/ChlL family. Homodimer. [4Fe-4S] cluster serves as cofactor. In terms of processing, the reversible ADP-ribosylation of Arg-100 inactivates the nitrogenase reductase and regulates nitrogenase activity.

The enzyme catalyses N2 + 8 reduced [2Fe-2S]-[ferredoxin] + 16 ATP + 16 H2O = H2 + 8 oxidized [2Fe-2S]-[ferredoxin] + 2 NH4(+) + 16 ADP + 16 phosphate + 6 H(+). The key enzymatic reactions in nitrogen fixation are catalyzed by the nitrogenase complex, which has 2 components: the iron protein (component 2) and a component 1 which is either a molybdenum-iron protein, a vanadium-iron, or an iron-iron protein. This is Nitrogenase iron protein 2 (anfH) from Rhodobacter capsulatus (Rhodopseudomonas capsulata).